Here is a 223-residue protein sequence, read N- to C-terminus: Putative nudix hydrolase 2 (223 aa).

One can recognise a Nudix hydrolase domain in the interval Ala-72–Ala-213. The Nudix box motif lies at Gly-111–Gly-132. Residues Glu-126 and Glu-130 each coordinate Mg(2+).

Belongs to the Nudix hydrolase family. It depends on Mg(2+) as a cofactor. Mn(2+) serves as cofactor.

Probably mediates the hydrolysis of some nucleoside diphosphate derivatives. The sequence is that of Putative nudix hydrolase 2 (ndx-2) from Caenorhabditis elegans.